The primary structure comprises 295 residues: Cytidine deaminase (295 aa).

CMP/dCMP-type deaminase domains lie at 48–168 (TDNQ…FGPS) and 187–295 (EDDD…YLSL). 89–91 (NME) serves as a coordination point for substrate. Histidine 102 contributes to the Zn(2+) binding site. The active-site Proton donor is glutamate 104. Cysteine 129 and cysteine 132 together coordinate Zn(2+).

The protein belongs to the cytidine and deoxycytidylate deaminase family. In terms of assembly, homodimer. Zn(2+) is required as a cofactor.

It catalyses the reaction cytidine + H2O + H(+) = uridine + NH4(+). The enzyme catalyses 2'-deoxycytidine + H2O + H(+) = 2'-deoxyuridine + NH4(+). Its function is as follows. This enzyme scavenges exogenous and endogenous cytidine and 2'-deoxycytidine for UMP synthesis. The protein is Cytidine deaminase of Vibrio vulnificus (strain YJ016).